A 143-amino-acid polypeptide reads, in one-letter code: Interleukin-3 (143 aa).

The signal sequence occupies residues 1–23 (MSSFPILHLLLLLLGCQVPQAQG). A glycan (N-linked (GlcNAc...) asparagine) is linked at Asn79.

The protein belongs to the IL-3 family. Monomer.

Its subcellular location is the secreted. Functionally, granulocyte/macrophage colony-stimulating factors are cytokines that act in hematopoiesis by controlling the production, differentiation, and function of 2 related white cell populations of the blood, the granulocytes and the monocytes-macrophages. In terms of biological role, this CSF induces granulocytes, macrophages, mast cells, stem cells, erythroid cells, eosinophils and megakaryocytes. In Canis lupus familiaris (Dog), this protein is Interleukin-3 (IL3).